The following is a 265-amino-acid chain: MSDLISALLLGILEGLTEFLPISSTGHLLIAEQWLGRRSDFFNIVIQAGAILAICLALRQRLWSLATGLGERANRDYVLKVGVAFLVTAVVGLIVRKAGWQLPETLQPVAWALLIGGVWMLVAEHFAGKLPERDVVTWKVAIAVGLAQVVAGVFPGTSRSASTIFIAMLLGLSKRSAAADFVFMVGIPTMFAASGYALLEMYKEGGFGTENWTDVAVAFVAATITGFVVVKWLLGYIKKHRFTVFAVYRMLLGAALLLWLPAAAG.

The next 7 helical transmembrane spans lie at Arg-38–Leu-58, Arg-75–Val-95, Pro-108–Gly-128, Val-135–Pro-155, Phe-181–Met-201, Val-215–Gly-235, and Val-244–Ala-264.

Belongs to the UppP family.

It is found in the cell inner membrane. The catalysed reaction is di-trans,octa-cis-undecaprenyl diphosphate + H2O = di-trans,octa-cis-undecaprenyl phosphate + phosphate + H(+). In terms of biological role, catalyzes the dephosphorylation of undecaprenyl diphosphate (UPP). Confers resistance to bacitracin. The protein is Undecaprenyl-diphosphatase of Xanthomonas euvesicatoria pv. vesicatoria (strain 85-10) (Xanthomonas campestris pv. vesicatoria).